Reading from the N-terminus, the 216-residue chain is UPF0502 protein Pmen_2627 (216 aa).

The protein belongs to the UPF0502 family.

The polypeptide is UPF0502 protein Pmen_2627 (Ectopseudomonas mendocina (strain ymp) (Pseudomonas mendocina)).